Reading from the N-terminus, the 335-residue chain is MAVDITLLFRASVKTVKTRNKALGVAVGGGVDGSRDELFRRSPRPKGDFSSRAREVISHIGKLRDFLLEHRKDYINAYSHTMSEYGRMTDTERDQIDQDAQIFMRTCSEAIQQLRTEAHKEIHSQQVKEHRTAVLDFIEDYLKRVCKLYSEQRAIRVKRVVDKKRLSKLEPEPNTKTRESTSSEKVSRSPSKDSEENPATEERPEKILAETQPELGTWGDGKGEDELSPEEIQMFEQENQRLIGEMNSLFDEVRQIEGRVVEISRLQEIFTEKVLQQEAEIDSIHQLVVGATENIKEGNEDIREAIKNNAGFRVWILFFLVMCSFSLLFLDWYDS.

Residues 1 to 309 lie on the Cytoplasmic side of the membrane; it reads MAVDITLLFR…EDIREAIKNN (309 aa). Over residues 168-208 the composition is skewed to basic and acidic residues; it reads KLEPEPNTKTRESTSSEKVSRSPSKDSEENPATEERPEKIL. Residues 168–226 form a disordered region; sequence KLEPEPNTKTRESTSSEKVSRSPSKDSEENPATEERPEKILAETQPELGTWGDGKGEDE. In terms of domain architecture, t-SNARE coiled-coil homology spans 243–305; that stretch reads IGEMNSLFDE…KEGNEDIREA (63 aa). A helical; Anchor for type IV membrane protein membrane pass occupies residues 310 to 330; the sequence is AGFRVWILFFLVMCSFSLLFL. Topologically, residues 331-335 are vesicular; it reads DWYDS.

Belongs to the syntaxin family. In terms of assembly, component of a SNARE complex consisting of STX18, USE1L, BNIP1/SEC20L, and SEC22B. RINT1/TIP20L and ZW10 are associated with the complex through interaction with BNIP1/SEC20L. Interacts directly with USE1L and BNIP1/SEC20L.

Its subcellular location is the endoplasmic reticulum membrane. It localises to the golgi apparatus membrane. Its function is as follows. Syntaxin that may be involved in targeting and fusion of Golgi-derived retrograde transport vesicles with the ER. The polypeptide is Syntaxin-18 (STX18) (Pongo abelii (Sumatran orangutan)).